Consider the following 356-residue polypeptide: Tyrosine recombinase XerS (356 aa).

The 106-residue stretch at 16–121 (IMPWYVLDYY…ALSSLYKYLT (106 aa)) folds into the Core-binding (CB) domain. In terms of domain architecture, Tyr recombinase spans 169–354 (AFLDYVDKEY…VNDEQKNALD (186 aa)). Active-site residues include Arg210, Lys234, His306, Arg309, and His332. Tyr341 acts as the O-(3'-phospho-DNA)-tyrosine intermediate in catalysis.

This sequence belongs to the 'phage' integrase family. XerS subfamily.

The protein resides in the cytoplasm. FtsK is required for recombination. In terms of biological role, site-specific tyrosine recombinase, which acts by catalyzing the cutting and rejoining of the recombining DNA molecules. Essential to convert dimers of the bacterial chromosome into monomers to permit their segregation at cell division. The sequence is that of Tyrosine recombinase XerS from Streptococcus pyogenes serotype M1.